The following is a 132-amino-acid chain: MSYLGKVYSLVKQENFDGFLKSAGLSDDKIQALVSDKPTQKMEANGDSYSITSTGIGGERTVSFKSGVEFDDVIGAGESVKSMYTVDGNVVTHVVKGDAGVATFKKEYNGDDLVVTITSSNWDGVARRYYKA.

At Ser2 the chain carries N-acetylserine. Hexadecanoate is bound by residues Gln40 and 128 to 130; that span reads RYY.

This sequence belongs to the calycin superfamily. Fatty-acid binding protein (FABP) family. Monomer. In terms of tissue distribution, midgut.

It localises to the cytoplasm. In terms of biological role, binds fatty acids in a 1:1 molar ratio. In Manduca sexta (Tobacco hawkmoth), this protein is Fatty acid-binding protein 2 (MFB2).